A 301-amino-acid polypeptide reads, in one-letter code: Ribosomal RNA small subunit methyltransferase H (301 aa).

Residues 35–37, D55, F84, D105, and Q112 contribute to the S-adenosyl-L-methionine site; that span reads GGH.

This sequence belongs to the methyltransferase superfamily. RsmH family.

It localises to the cytoplasm. The catalysed reaction is cytidine(1402) in 16S rRNA + S-adenosyl-L-methionine = N(4)-methylcytidine(1402) in 16S rRNA + S-adenosyl-L-homocysteine + H(+). In terms of biological role, specifically methylates the N4 position of cytidine in position 1402 (C1402) of 16S rRNA. In Chloroflexus aurantiacus (strain ATCC 29366 / DSM 635 / J-10-fl), this protein is Ribosomal RNA small subunit methyltransferase H.